Reading from the N-terminus, the 172-residue chain is 6,7-dimethyl-8-ribityllumazine synthase (172 aa).

5-amino-6-(D-ribitylamino)uracil-binding positions include Phe-24, Ala-58–Glu-60, and Ala-82–Ile-84. Glu-87–Thr-88 contacts (2S)-2-hydroxy-3-oxobutyl phosphate. The Proton donor role is filled by His-90. Asn-115 lines the 5-amino-6-(D-ribitylamino)uracil pocket. Position 129 (Arg-129) interacts with (2S)-2-hydroxy-3-oxobutyl phosphate. A disordered region spans residues Ala-150–Ala-172. A compositionally biased stretch (acidic residues) spans Leu-154–Ala-172.

The protein belongs to the DMRL synthase family.

It catalyses the reaction (2S)-2-hydroxy-3-oxobutyl phosphate + 5-amino-6-(D-ribitylamino)uracil = 6,7-dimethyl-8-(1-D-ribityl)lumazine + phosphate + 2 H2O + H(+). It functions in the pathway cofactor biosynthesis; riboflavin biosynthesis; riboflavin from 2-hydroxy-3-oxobutyl phosphate and 5-amino-6-(D-ribitylamino)uracil: step 1/2. Its function is as follows. Catalyzes the formation of 6,7-dimethyl-8-ribityllumazine by condensation of 5-amino-6-(D-ribitylamino)uracil with 3,4-dihydroxy-2-butanone 4-phosphate. This is the penultimate step in the biosynthesis of riboflavin. In Paraburkholderia phymatum (strain DSM 17167 / CIP 108236 / LMG 21445 / STM815) (Burkholderia phymatum), this protein is 6,7-dimethyl-8-ribityllumazine synthase.